The primary structure comprises 304 residues: Pyridoxal 5'-phosphate synthase subunit PdxS (304 aa).

Residue Asp-34 participates in D-ribose 5-phosphate binding. Lys-91 functions as the Schiff-base intermediate with D-ribose 5-phosphate in the catalytic mechanism. Gly-163 contacts D-ribose 5-phosphate. Arg-175 provides a ligand contact to D-glyceraldehyde 3-phosphate. D-ribose 5-phosphate-binding positions include Gly-224 and 245-246 (GS).

It belongs to the PdxS/SNZ family. In the presence of PdxT, forms a dodecamer of heterodimers.

The catalysed reaction is aldehydo-D-ribose 5-phosphate + D-glyceraldehyde 3-phosphate + L-glutamine = pyridoxal 5'-phosphate + L-glutamate + phosphate + 3 H2O + H(+). The protein operates within cofactor biosynthesis; pyridoxal 5'-phosphate biosynthesis. Its function is as follows. Catalyzes the formation of pyridoxal 5'-phosphate from ribose 5-phosphate (RBP), glyceraldehyde 3-phosphate (G3P) and ammonia. The ammonia is provided by the PdxT subunit. Can also use ribulose 5-phosphate and dihydroxyacetone phosphate as substrates, resulting from enzyme-catalyzed isomerization of RBP and G3P, respectively. The protein is Pyridoxal 5'-phosphate synthase subunit PdxS of Cutibacterium acnes (strain DSM 16379 / KPA171202) (Propionibacterium acnes).